Reading from the N-terminus, the 69-residue chain is Bacteriocin microcin B17 (69 aa).

A propeptide spanning residues 1–26 is cleaved from the precursor; it reads MELKASEFGVVLSVDALKLSRQSPLG. A cross-link (oxazole-4-carboxylic acid (Gly-Ser)) is located at residues 39-40; the sequence is GS. The thiazole-4-carboxylic acid (Ser-Cys) cross-link spans 40–41; the sequence is SC. Cross-links (thiazole-4-carboxylic acid (Gly-Cys)) lie at residues 47-48, 50-51, and 54-55; these read GC. Positions 55–56 form a cross-link, oxazole-4-carboxylic acid (Cys-Ser); sequence CS. Cross-links (oxazole-4-carboxylic acid (Gly-Ser)) lie at residues 61-62 and 64-65; these read GS.

The processed N-terminus does not resemble a typical secretion signal sequence. Post-translationally, maturation of thiazole and oxazole containing antibiotics involves the enzymatic condensation of a Cys, Ser or Thr with the alpha-carbonyl of the preceding amino acid to form a thioether or ether bond, then dehydration to form a double bond with the alpha-amino nitrogen. Thiazoline or oxazoline rings are dehydrogenated to form thiazole or oxazole rings.

Its function is as follows. This glycine-rich peptide antibiotic inhibits DNA replication in many enteric bacteria, that leads to induction of the SOS repair system, massive DNA degradation and cell death. B17 inhibits type II topoisomerase by trapping an enzyme - DNA cleavable complex. The chain is Bacteriocin microcin B17 (mcbA) from Escherichia coli.